The chain runs to 689 residues: Glycine--tRNA ligase beta subunit (689 aa).

This sequence belongs to the class-II aminoacyl-tRNA synthetase family. Tetramer of two alpha and two beta subunits.

It is found in the cytoplasm. It carries out the reaction tRNA(Gly) + glycine + ATP = glycyl-tRNA(Gly) + AMP + diphosphate. The sequence is that of Glycine--tRNA ligase beta subunit from Aeromonas salmonicida (strain A449).